A 361-amino-acid chain; its full sequence is MTVPCIPRGPVMADIAAFRLTEEEKQRLLDPAVGGVILFRRNFQNIAQLKELTAEIKALRTPELIIAVDHEGGRVQRFIEGFTRLPAMNVLGQIWDKDGASAAETAARQIGWVLATELSACGIDLSFTPVLDLDWGNCAVIGNRSFHRNPEAVARLALALQKGLEKGGMKSCGKHFPGHGFVEGDSHLVLPEDGRSLSELEAADLAPFRIMSREGMAAVMPAHVVYPQVDTKPAGFSEIWLKQILRRDIGFKGVIFSDDLTMEGACGAGGIKERARISFEAGCDIVLVCNRPDLVDELRDDFRIPDNPALAQRWQYMANTLGSAAAQAVIQTADFQAAQAFVAGLASPQDTAGGVKVGEAF.

Substrate contacts are provided by residues D69, R77, R144, and 174 to 175; that span reads KH. The Proton donor/acceptor role is filled by H187. D258 acts as the Nucleophile in catalysis.

The protein belongs to the glycosyl hydrolase 3 family. NagZ subfamily.

It is found in the cytoplasm. The enzyme catalyses Hydrolysis of terminal non-reducing N-acetyl-D-hexosamine residues in N-acetyl-beta-D-hexosaminides.. Its pathway is cell wall biogenesis; peptidoglycan recycling. Plays a role in peptidoglycan recycling by cleaving the terminal beta-1,4-linked N-acetylglucosamine (GlcNAc) from peptide-linked peptidoglycan fragments, giving rise to free GlcNAc, anhydro-N-acetylmuramic acid and anhydro-N-acetylmuramic acid-linked peptides. The chain is Beta-hexosaminidase from Neisseria meningitidis serogroup A / serotype 4A (strain DSM 15465 / Z2491).